A 228-amino-acid polypeptide reads, in one-letter code: Tol-Pal system protein TolQ (228 aa).

3 helical membrane passes run 16–36 (IVVQ…WAII), 137–157 (VSPY…FMAL), and 172–192 (IAEA…AVMA).

It belongs to the ExbB/TolQ family. The Tol-Pal system is composed of five core proteins: the inner membrane proteins TolA, TolQ and TolR, the periplasmic protein TolB and the outer membrane protein Pal. They form a network linking the inner and outer membranes and the peptidoglycan layer.

The protein resides in the cell inner membrane. Functionally, part of the Tol-Pal system, which plays a role in outer membrane invagination during cell division and is important for maintaining outer membrane integrity. The chain is Tol-Pal system protein TolQ from Haemophilus influenzae (strain ATCC 51907 / DSM 11121 / KW20 / Rd).